Consider the following 139-residue polypeptide: MVERTFSIIKPDAVERNLQGEVLAMIQGAGLKVVAMKMIHLTKAQAEGFYAVHRERPFFDSLTTYMCSGPVVCSVLEGENAISRYREIMGATNPANAAEGTIRKKYAVSLEANSVHGSDAPETAAFEISYFFNALEIVG.

Lysine 10, phenylalanine 58, arginine 86, threonine 92, arginine 103, and asparagine 113 together coordinate ATP. Histidine 116 serves as the catalytic Pros-phosphohistidine intermediate.

The protein belongs to the NDK family. Homotetramer. Mg(2+) serves as cofactor.

It is found in the cytoplasm. It carries out the reaction a 2'-deoxyribonucleoside 5'-diphosphate + ATP = a 2'-deoxyribonucleoside 5'-triphosphate + ADP. It catalyses the reaction a ribonucleoside 5'-diphosphate + ATP = a ribonucleoside 5'-triphosphate + ADP. Its function is as follows. Major role in the synthesis of nucleoside triphosphates other than ATP. The ATP gamma phosphate is transferred to the NDP beta phosphate via a ping-pong mechanism, using a phosphorylated active-site intermediate. The chain is Nucleoside diphosphate kinase from Nitratidesulfovibrio vulgaris (strain ATCC 29579 / DSM 644 / CCUG 34227 / NCIMB 8303 / VKM B-1760 / Hildenborough) (Desulfovibrio vulgaris).